The following is a 261-amino-acid chain: tRNA pseudouridine synthase A (261 aa).

Asp53 acts as the Nucleophile in catalysis. Substrate is bound at residue Tyr111.

The protein belongs to the tRNA pseudouridine synthase TruA family. In terms of assembly, homodimer.

It catalyses the reaction uridine(38/39/40) in tRNA = pseudouridine(38/39/40) in tRNA. Functionally, formation of pseudouridine at positions 38, 39 and 40 in the anticodon stem and loop of transfer RNAs. This chain is tRNA pseudouridine synthase A, found in Shouchella clausii (strain KSM-K16) (Alkalihalobacillus clausii).